Reading from the N-terminus, the 338-residue chain is UDP-glucose 4-epimerase (338 aa).

NAD(+) contacts are provided by residues 11–12, 31–36, 58–59, 80–84, asparagine 99, serine 124, tyrosine 149, lysine 153, and phenylalanine 178; these read YI, DNLCNS, DI, and FAGLK. 2 residues coordinate substrate: serine 124 and tyrosine 149. The active-site Proton acceptor is tyrosine 149. Substrate contacts are provided by residues asparagine 179, 199–200, 216–218, arginine 231, 292–295, and tyrosine 299; these read NL, AVF, and RDGD.

Belongs to the NAD(P)-dependent epimerase/dehydratase family. In terms of assembly, homodimer. The cofactor is NAD(+).

The enzyme catalyses UDP-alpha-D-glucose = UDP-alpha-D-galactose. It functions in the pathway carbohydrate metabolism; galactose metabolism. Involved in the metabolism of galactose. Catalyzes the conversion of UDP-galactose (UDP-Gal) to UDP-glucose (UDP-Glc) through a mechanism involving the transient reduction of NAD. The chain is UDP-glucose 4-epimerase (galE) from Salmonella typhi.